A 138-amino-acid chain; its full sequence is Basic phospholipase A2 trimucrotoxin (138 aa).

An N-terminal signal peptide occupies residues 1-16; sequence MRTLWIVAVLLLGVEG. Intrachain disulfides connect C42/C131, C44/C60, C59/C111, C65/C138, C66/C104, C73/C97, and C91/C102. Ca(2+) is bound by residues Y43, G45, and G47. H63 is an active-site residue. D64 contributes to the Ca(2+) binding site. D105 is an active-site residue.

It belongs to the phospholipase A2 family. Group II subfamily. D49 sub-subfamily. As to quaternary structure, homodimer. It depends on Ca(2+) as a cofactor. As to expression, expressed by the venom gland.

The protein resides in the secreted. The catalysed reaction is a 1,2-diacyl-sn-glycero-3-phosphocholine + H2O = a 1-acyl-sn-glycero-3-phosphocholine + a fatty acid + H(+). In terms of biological role, snake venom phospholipase A2 (PLA2) that displays edema-inducing activities, as well as presynaptic neurotoxicity and low myotoxicity. PLA2 catalyzes the calcium-dependent hydrolysis of the 2-acyl groups in 3-sn-phosphoglycerides. The chain is Basic phospholipase A2 trimucrotoxin from Protobothrops mucrosquamatus (Taiwan habu).